The sequence spans 360 residues: Peptide chain release factor 1 (360 aa).

Gln-237 bears the N5-methylglutamine mark.

Belongs to the prokaryotic/mitochondrial release factor family. Post-translationally, methylated by PrmC. Methylation increases the termination efficiency of RF1.

It is found in the cytoplasm. Peptide chain release factor 1 directs the termination of translation in response to the peptide chain termination codons UAG and UAA. This is Peptide chain release factor 1 from Pseudomonas fluorescens (strain SBW25).